The sequence spans 680 residues: tRNA 5-methylaminomethyl-2-thiouridine biosynthesis bifunctional protein MnmC (680 aa).

A tRNA (mnm(5)s(2)U34)-methyltransferase region spans residues 1-267 (MTAEPNKPCQ…MAAILSSDAP (267 aa)). The segment at 273–680 (IGGGLASAHL…LRKLLKGKAL (408 aa)) is FAD-dependent cmnm(5)s(2)U34 oxidoreductase.

It in the N-terminal section; belongs to the methyltransferase superfamily. tRNA (mnm(5)s(2)U34)-methyltransferase family. In the C-terminal section; belongs to the DAO family. It depends on FAD as a cofactor.

It is found in the cytoplasm. It catalyses the reaction 5-aminomethyl-2-thiouridine(34) in tRNA + S-adenosyl-L-methionine = 5-methylaminomethyl-2-thiouridine(34) in tRNA + S-adenosyl-L-homocysteine + H(+). Functionally, catalyzes the last two steps in the biosynthesis of 5-methylaminomethyl-2-thiouridine (mnm(5)s(2)U) at the wobble position (U34) in tRNA. Catalyzes the FAD-dependent demodification of cmnm(5)s(2)U34 to nm(5)s(2)U34, followed by the transfer of a methyl group from S-adenosyl-L-methionine to nm(5)s(2)U34, to form mnm(5)s(2)U34. This chain is tRNA 5-methylaminomethyl-2-thiouridine biosynthesis bifunctional protein MnmC, found in Shewanella putrefaciens (strain CN-32 / ATCC BAA-453).